The primary structure comprises 307 residues: Aspartate carbamoyltransferase catalytic subunit (307 aa).

Carbamoyl phosphate is bound by residues R59 and T60. Position 87 (K87) interacts with L-aspartate. Carbamoyl phosphate is bound by residues R109, H137, and Q140. Residues R173 and R223 each coordinate L-aspartate. Carbamoyl phosphate-binding residues include G266 and P267.

It belongs to the aspartate/ornithine carbamoyltransferase superfamily. ATCase family. As to quaternary structure, heterododecamer (2C3:3R2) of six catalytic PyrB chains organized as two trimers (C3), and six regulatory PyrI chains organized as three dimers (R2).

The catalysed reaction is carbamoyl phosphate + L-aspartate = N-carbamoyl-L-aspartate + phosphate + H(+). It functions in the pathway pyrimidine metabolism; UMP biosynthesis via de novo pathway; (S)-dihydroorotate from bicarbonate: step 2/3. Catalyzes the condensation of carbamoyl phosphate and aspartate to form carbamoyl aspartate and inorganic phosphate, the committed step in the de novo pyrimidine nucleotide biosynthesis pathway. In Helicobacter pylori (strain ATCC 700392 / 26695) (Campylobacter pylori), this protein is Aspartate carbamoyltransferase catalytic subunit.